Consider the following 137-residue polypeptide: Large ribosomal subunit protein uL16 (137 aa).

It belongs to the universal ribosomal protein uL16 family. Part of the 50S ribosomal subunit.

Functionally, binds 23S rRNA and is also seen to make contacts with the A and possibly P site tRNAs. The chain is Large ribosomal subunit protein uL16 from Nitrobacter hamburgensis (strain DSM 10229 / NCIMB 13809 / X14).